A 648-amino-acid polypeptide reads, in one-letter code: MGKIIGIDLGTTNSCVAVMEGNQVKVIENSEGARTTPSIIAYMDDNEVLVGAPAKRQSVTNPKNTLFAVKRLIGRRFEEKEVQKDIGLMPYSIIKADNGDAWVEAHGQKLAPPQVSAEVLRKMKKTAEDYLGEPVTEAVITVPAYFNDSQRQATKDAGRIAGLEVKRIINEPTAAALAFGLDKAEKGDRKIAVYDLGGGTFDVSIIEIADVDGEKQFEVLSTNGDTFLGGEDFDQRIIDYIIGEFKKEQGVDLSKDVLALQRLKEAAEKAKIELSSSQQTEINLPYITADASGPKHLNLKITRAKLEALVEDLVERTIEPCRIAIKDAGVKVSDIDDVILVGGQTRMPKVQEKVKEFFGKEPRRDVNPDEAVAVGAAIQGQVLSGDRKDVLLLDVTPLSLGIETLGGVMTKMISKNTTIPTKHSQVYSTADDNQSAVTIKVYQGEREMAAGNKLLGEFNLEGIPPAPRGVPQIEVTFDIDANGILHVGAKDKATGKENKITIKANSGLSEAEIDQMIKDAEANAAEDHKLRELADSRNQGDALVHSTKKALSEYGDKLDAGEKEKIEAALKSLEDVLKDTSADKAAIDAKVEELGKASQKLGEKMYADMQAQAGAAGAAGAAEGAAQGGAQQAADDVVDAEFKEVKKD.

T200 carries the post-translational modification Phosphothreonine; by autocatalysis. The interval 612–631 (QAGAAGAAGAAEGAAQGGAQ) is disordered.

Belongs to the heat shock protein 70 family.

Acts as a chaperone. The chain is Chaperone protein DnaK from Burkholderia multivorans (strain ATCC 17616 / 249).